The chain runs to 32 residues: U3-ctenitoxin-Pk1a (32 aa).

3 cysteine pairs are disulfide-bonded: cysteine 3–cysteine 17, cysteine 10–cysteine 21, and cysteine 16–cysteine 30.

This sequence belongs to the neurotoxin 17 (21C2) family. Expressed by the venom gland.

Its subcellular location is the secreted. May act as a neurotoxin. This Phoneutria keyserlingi (Brazilian wandering spider) protein is U3-ctenitoxin-Pk1a.